A 521-amino-acid chain; its full sequence is Bifunctional purine biosynthesis protein PurH (521 aa).

The MGS-like domain maps to 1–145 (MIKQALISVS…KNHRDVTVVV (145 aa)).

Belongs to the PurH family.

The catalysed reaction is (6R)-10-formyltetrahydrofolate + 5-amino-1-(5-phospho-beta-D-ribosyl)imidazole-4-carboxamide = 5-formamido-1-(5-phospho-D-ribosyl)imidazole-4-carboxamide + (6S)-5,6,7,8-tetrahydrofolate. The enzyme catalyses IMP + H2O = 5-formamido-1-(5-phospho-D-ribosyl)imidazole-4-carboxamide. Its pathway is purine metabolism; IMP biosynthesis via de novo pathway; 5-formamido-1-(5-phospho-D-ribosyl)imidazole-4-carboxamide from 5-amino-1-(5-phospho-D-ribosyl)imidazole-4-carboxamide (10-formyl THF route): step 1/1. The protein operates within purine metabolism; IMP biosynthesis via de novo pathway; IMP from 5-formamido-1-(5-phospho-D-ribosyl)imidazole-4-carboxamide: step 1/1. The protein is Bifunctional purine biosynthesis protein PurH of Burkholderia cenocepacia (strain HI2424).